A 401-amino-acid polypeptide reads, in one-letter code: Nodulation protein E (401 aa).

The Ketosynthase family 3 (KS3) domain occupies Asp-2–Gln-400. Active-site for beta-ketoacyl synthase activity residues include Cys-162, His-294, and His-331. A helical membrane pass occupies residues His-329 to Ile-348.

Belongs to the thiolase-like superfamily. Beta-ketoacyl-ACP synthases family.

The protein resides in the cell inner membrane. In terms of biological role, proposed to synthesize NOD factor fatty acyl chain. Involved in the synthesis of a highly unsaturated fatty acid moiety, which forms part of a lipo-oligosaccharide that is responsible for host specificity. This chain is Nodulation protein E (nodE), found in Rhizobium leguminosarum bv. trifolii.